The following is a 252-amino-acid chain: MGVLLTQRTLLSLVLALLFPSMASMAAIGSCSKEYRVLLGQLQKQTDLMQDTSRLLDPYIRIQGLDVPKLREHCRERPGAFPSEETLRGLGRRGFLQTLNATLGCVLHRLADLEQRLPKAQDLERSGLNIEDLEKLQMARPNILGLRNNIYCMAQLLDNSDTAEPTKAGRGASQPPTPTPASDAFQRKLEGCRFLHGYHRFMHSVGRVFSKWGESPNRSRRHSPHQALRKGVRRTRPSRKGKRLMTRGQLPR.

An N-terminal signal peptide occupies residues 1–25; it reads MGVLLTQRTLLSLVLALLFPSMASM. 2 cysteine pairs are disulfide-bonded: Cys31/Cys152 and Cys74/Cys192. Asn100 is a glycosylation site (N-linked (GlcNAc...) asparagine). Disordered stretches follow at residues 162–184 and 213–252; these read TAEP…ASDA and GESP…QLPR. An N-linked (GlcNAc...) asparagine glycan is attached at Asn217. The span at 218 to 245 shows a compositional bias: basic residues; that stretch reads RSRRHSPHQALRKGVRRTRPSRKGKRLM. The propeptide occupies 222–252; sequence HSPHQALRKGVRRTRPSRKGKRLMTRGQLPR.

It belongs to the LIF/OSM family. Post-translationally, propeptide processing is not important for receptor binding activity but may be important growth-inhibitory activity.

The protein resides in the secreted. Growth regulator. Inhibits the proliferation of a number of tumor cell lines. Stimulates proliferation of AIDS-KS cells. It regulates cytokine production, including IL-6, G-CSF and GM-CSF from endothelial cells. Uses both type I OSM receptor (heterodimers composed of LIFR and IL6ST) and type II OSM receptor (heterodimers composed of OSMR and IL6ST). Involved in the maturation of fetal hepatocytes, thereby promoting liver development and regeneration. This chain is Oncostatin-M (OSM), found in Homo sapiens (Human).